We begin with the raw amino-acid sequence, 123 residues long: UPF0102 protein Dole_2298 (123 aa).

The protein belongs to the UPF0102 family.

The protein is UPF0102 protein Dole_2298 of Desulfosudis oleivorans (strain DSM 6200 / JCM 39069 / Hxd3) (Desulfococcus oleovorans).